Reading from the N-terminus, the 185-residue chain is Transcription factor FapR (185 aa).

The protein belongs to the FapR family.

Functionally, transcriptional factor involved in regulation of membrane lipid biosynthesis by repressing genes involved in fatty acid and phospholipid metabolism. The protein is Transcription factor FapR of Staphylococcus aureus (strain Mu3 / ATCC 700698).